The primary structure comprises 567 residues: Sensor histidine kinase MtrB (567 aa).

A compositionally biased stretch (basic residues) spans 1 to 15 (MIFGSRRRIRGRRGR). The segment at 1–20 (MIFGSRRRIRGRRGRSGPMT) is disordered. Helical transmembrane passes span 42–62 (VVAL…FVLT) and 213–233 (GTMA…ALLV). In terms of domain architecture, HAMP spans 235–287 (RQVVVPVRSASRIAERFAEGHLSERMPVRGEDDMARLAVSFNDMAESLSRQIA). One can recognise a Histidine kinase domain in the interval 302–519 (DVSHELRTPL…CFRLTLPLVR (218 aa)). A Phosphohistidine; by autocatalysis modification is found at H305. The interval 526 to 567 (SPLPMKPIPQPVLQPVAQPNPQPMPPEYKERQRPREHAEWSG) is disordered. Residues 529-551 (PMKPIPQPVLQPVAQPNPQPMPP) show a composition bias toward pro residues. Basic and acidic residues predominate over residues 552–567 (EYKERQRPREHAEWSG).

The protein resides in the cell membrane. The catalysed reaction is ATP + protein L-histidine = ADP + protein N-phospho-L-histidine.. Functionally, member of the two-component regulatory system MtrA/MtrB. Seems to function as a membrane-associated protein kinase that phosphorylates MtrA in response to environmental signals. This is Sensor histidine kinase MtrB (mtrB) from Mycobacterium bovis (strain ATCC BAA-935 / AF2122/97).